The chain runs to 98 residues: Nuclear protein 2 (98 aa).

Residues 1-11 (MEPAAPTVQPR) are compositionally biased toward low complexity. Disordered stretches follow at residues 1 to 24 (MEPA…PPVG) and 78 to 98 (LNSQ…TRLT). A compositionally biased stretch (basic residues) spans 81–98 (QRKRRQRQLQPRPRTRLT).

The protein belongs to the NUPR family.

The protein localises to the nucleus. Functionally, acts as a transcriptional repressor by inhibiting gene expression at the NUPR1 promoter in a p53/TP53-dependent manner in cancer cells. Involved in the G1 cell cycle arrest, and in a decrease in cell viability and cell proliferation. Plays a role as a negative regulator of the protumoral factor NUPR1. The sequence is that of Nuclear protein 2 from Bos taurus (Bovine).